We begin with the raw amino-acid sequence, 670 residues long: Sodium, potassium, lithium and rubidium/H(+) antiporter (670 aa).

11 helical membrane passes run 5-27 (LVVLVLLTIIAISNIVNRFIPFI), 46-66 (GLHFELNTELFFVLFIAPLLF), 83-103 (PILLLALGLVFATVIVGGYTI), 105-125 (WMIPAIPLAAAFGLAAILSPT), 156-176 (ASGLVAFKFAIAAAVTGAFSL), 182-202 (SFVFISLGGLLCGVVISFLII), 228-248 (FVIYLAAEEIGVSGILAVVAG), 276-296 (IILFILNGLVFVILGTQIPDV), 314-334 (YILVITFTLMLLRFLWVLFFW), 355-375 (LLISISGVRGAVTLAGSFSIP), and 389-409 (LILFLAAGVILCTLVIATVVL).

This sequence belongs to the monovalent cation:proton antiporter 1 (CPA1) transporter (TC 2.A.36) family. Nhak (TC 2.A.36.3.2) subfamily.

Its subcellular location is the cell membrane. Transporter involved in the efflux of sodium, potassium, lithium and rubidium. This chain is Sodium, potassium, lithium and rubidium/H(+) antiporter (nhaK), found in Bacillus subtilis (strain 168).